The chain runs to 136 residues: Small ribosomal subunit protein uS12 (136 aa).

The residue at position 89 (D89) is a 3-methylthioaspartic acid. The interval 101–136 (SLDTSGVADRKQSRSKYGAKQPKAGVPAPVKGKGKR) is disordered.

It belongs to the universal ribosomal protein uS12 family. Part of the 30S ribosomal subunit. Contacts proteins S8 and S17. May interact with IF1 in the 30S initiation complex.

Its function is as follows. With S4 and S5 plays an important role in translational accuracy. Functionally, interacts with and stabilizes bases of the 16S rRNA that are involved in tRNA selection in the A site and with the mRNA backbone. Located at the interface of the 30S and 50S subunits, it traverses the body of the 30S subunit contacting proteins on the other side and probably holding the rRNA structure together. The combined cluster of proteins S8, S12 and S17 appears to hold together the shoulder and platform of the 30S subunit. In Pelodictyon phaeoclathratiforme (strain DSM 5477 / BU-1), this protein is Small ribosomal subunit protein uS12.